The primary structure comprises 252 residues: Imidazole glycerol phosphate synthase subunit HisF (252 aa).

Residues D13 and D132 contribute to the active site.

The protein belongs to the HisA/HisF family. As to quaternary structure, heterodimer of HisH and HisF.

The protein resides in the cytoplasm. The catalysed reaction is 5-[(5-phospho-1-deoxy-D-ribulos-1-ylimino)methylamino]-1-(5-phospho-beta-D-ribosyl)imidazole-4-carboxamide + L-glutamine = D-erythro-1-(imidazol-4-yl)glycerol 3-phosphate + 5-amino-1-(5-phospho-beta-D-ribosyl)imidazole-4-carboxamide + L-glutamate + H(+). It participates in amino-acid biosynthesis; L-histidine biosynthesis; L-histidine from 5-phospho-alpha-D-ribose 1-diphosphate: step 5/9. IGPS catalyzes the conversion of PRFAR and glutamine to IGP, AICAR and glutamate. The HisF subunit catalyzes the cyclization activity that produces IGP and AICAR from PRFAR using the ammonia provided by the HisH subunit. The polypeptide is Imidazole glycerol phosphate synthase subunit HisF (Campylobacter hominis (strain ATCC BAA-381 / DSM 21671 / CCUG 45161 / LMG 19568 / NCTC 13146 / CH001A)).